Here is a 266-residue protein sequence, read N- to C-terminus: Gas vesicle protein L (266 aa).

It belongs to the gas vesicle GvpF/GvpL family.

It is found in the gas vesicle. Functionally, might be involved in nucleating gas vesicle formation. A minor component of the gas vesicle. Gas vesicles are hollow, gas filled proteinaceous nanostructures found in some microorganisms. It is not clear what function gas vesicles perform in soil bacteria. The chain is Gas vesicle protein L from Streptomyces sp. (strain CB03234).